We begin with the raw amino-acid sequence, 296 residues long: Ribosomal RNA small subunit methyltransferase A (296 aa).

6 residues coordinate S-adenosyl-L-methionine: Asn-32, Leu-34, Gly-59, Glu-80, Asp-105, and Asn-130.

The protein belongs to the class I-like SAM-binding methyltransferase superfamily. rRNA adenine N(6)-methyltransferase family. RsmA subfamily.

Its subcellular location is the cytoplasm. The enzyme catalyses adenosine(1518)/adenosine(1519) in 16S rRNA + 4 S-adenosyl-L-methionine = N(6)-dimethyladenosine(1518)/N(6)-dimethyladenosine(1519) in 16S rRNA + 4 S-adenosyl-L-homocysteine + 4 H(+). Functionally, specifically dimethylates two adjacent adenosines (A1518 and A1519) in the loop of a conserved hairpin near the 3'-end of 16S rRNA in the 30S particle. May play a critical role in biogenesis of 30S subunits. The protein is Ribosomal RNA small subunit methyltransferase A of Ligilactobacillus salivarius (strain UCC118) (Lactobacillus salivarius).